We begin with the raw amino-acid sequence, 734 residues long: Photosystem I P700 chlorophyll a apoprotein A2 (734 aa).

8 consecutive transmembrane segments (helical) span residues 46–69 (IFAS…FHVA), 135–158 (LYTG…LHLQ), 175–199 (LNHH…HVAI), 273–291 (IAHH…GHMY), 330–353 (LHFQ…QHMY), 369–395 (AALY…IFFI), 417–439 (AIIS…LYVH), and 517–535 (FLVH…LILV). Cys559 and Cys568 together coordinate [4Fe-4S] cluster. 2 helical membrane passes run 575-596 (AFYL…YWHW) and 643-665 (LSVW…MFLI). Residues His654, Met662, and Tyr670 each coordinate chlorophyll a. Trp671 lines the phylloquinone pocket. The helical transmembrane segment at 707–727 (LVGLAHFSVGYIFTYAAFLIA) threads the bilayer.

Belongs to the PsaA/PsaB family. As to quaternary structure, the PsaA/B heterodimer binds the P700 chlorophyll special pair and subsequent electron acceptors. PSI consists of a core antenna complex that captures photons, and an electron transfer chain that converts photonic excitation into a charge separation. The eukaryotic PSI reaction center is composed of at least 11 subunits. The cofactor is P700 is a chlorophyll a/chlorophyll a' dimer, A0 is one or more chlorophyll a, A1 is one or both phylloquinones and FX is a shared 4Fe-4S iron-sulfur center..

Its subcellular location is the plastid. The protein localises to the chloroplast thylakoid membrane. It carries out the reaction reduced [plastocyanin] + hnu + oxidized [2Fe-2S]-[ferredoxin] = oxidized [plastocyanin] + reduced [2Fe-2S]-[ferredoxin]. PsaA and PsaB bind P700, the primary electron donor of photosystem I (PSI), as well as the electron acceptors A0, A1 and FX. PSI is a plastocyanin-ferredoxin oxidoreductase, converting photonic excitation into a charge separation, which transfers an electron from the donor P700 chlorophyll pair to the spectroscopically characterized acceptors A0, A1, FX, FA and FB in turn. Oxidized P700 is reduced on the lumenal side of the thylakoid membrane by plastocyanin. This chain is Photosystem I P700 chlorophyll a apoprotein A2, found in Nicotiana tabacum (Common tobacco).